The following is a 501-amino-acid chain: Cytochrome P450 2S1 (501 aa).

A heme-binding site is contributed by cysteine 441.

The protein belongs to the cytochrome P450 family. Heme serves as cofactor.

It localises to the endoplasmic reticulum membrane. The protein localises to the microsome membrane. It carries out the reaction all-trans-retinoate + reduced [NADPH--hemoprotein reductase] + O2 = all-trans-5,6-epoxyretinoate + oxidized [NADPH--hemoprotein reductase] + H2O + H(+). The enzyme catalyses all-trans-retinoate + reduced [NADPH--hemoprotein reductase] + O2 = all-trans-4-hydroxyretinoate + oxidized [NADPH--hemoprotein reductase] + H2O + H(+). The catalysed reaction is (5S)-hydroperoxy-(6E,8Z,11Z,14Z)-eicosatetraenoate = 5-oxo-(6E,8Z,11Z,14Z)-eicosatetraenoate + H2O. It catalyses the reaction (12S)-hydroperoxy-(5Z,8Z,10E,14Z)-eicosatetraenoate = 12-oxo-(5Z,8Z,10E,14Z)-eicosatetraenoate + H2O. It carries out the reaction (15S)-hydroperoxy-(5Z,8Z,11Z,13E)-eicosatetraenoate = 15-oxo-(5Z,8Z,11Z,13E)-eicosatetraenoate + H2O. The enzyme catalyses prostaglandin H2 = thromboxane A2. The catalysed reaction is prostaglandin H2 = (12S)-hydroxy-(5Z,8E,10E)-heptadecatrienoate + malonaldehyde. It catalyses the reaction (13S)-hydroperoxy-(9Z,11E)-octadecadienoate = 13-oxo-(9Z,11E)-octadecadienoate + H2O. It functions in the pathway lipid metabolism; fatty acid metabolism. Its function is as follows. A cytochrome P450 monooxygenase involved in the metabolism of retinoids and eicosanoids. In epidermis, may contribute to the oxidative metabolism of all-trans-retinoic acid. For this activity, uses molecular oxygen inserting one oxygen atom into a substrate, and reducing the second into a water molecule, with two electrons provided by NADPH via cytochrome P450 reductase (NADPH--hemoprotein reductase). Additionally, displays peroxidase and isomerase activities toward various oxygenated eicosanoids such as prostaglandin H2 (PGH2) and hydroperoxyeicosatetraenoates (HPETEs). Independently of cytochrome P450 reductase, NADPH, and O2, catalyzes the breakdown of PGH2 to hydroxyheptadecatrienoic acid (HHT) and malondialdehyde (MDA), which is known to act as a mediator of DNA damage. This is Cytochrome P450 2S1 (Cyp2s1) from Mus musculus (Mouse).